The chain runs to 211 residues: Riboflavin transporter RibU (211 aa).

The next 5 membrane-spanning stretches (helical) occupy residues 34–54 (AYIA…FPLI), 66–86 (ILPV…GVLL), 104–124 (IGLP…SYFW), 134–154 (ILGS…LNYI), and 180–200 (AMVV…FALI).

The protein belongs to the prokaryotic riboflavin transporter (P-RFT) (TC 2.A.87) family. In terms of assembly, forms a stable energy-coupling factor (ECF) transporter complex composed of 2 membrane-embedded substrate-binding proteins (S component), 2 ATP-binding proteins (A component) and 2 transmembrane proteins (T component) upon coexpression of the 4 components in E.coli.

It is found in the cell membrane. Functionally, substrate-binding (S) component of an energy-coupling factor (ECF) ABC-transporter complex. Mediates riboflavin uptake, may also transport FMN and roseoflavin. Probably a riboflavin-binding protein that interacts with the energy-coupling factor (ECF) ABC-transporter complex. Unlike classic ABC transporters this ECF transporter provides the energy necessary to transport a number of different substrates. The substrates themselves are bound by transmembrane, not extracytoplasmic soluble proteins. Expression of the complex plus RibU in E.coli allows riboflavin uptake. This Streptococcus thermophilus (strain ATCC BAA-250 / LMG 18311) protein is Riboflavin transporter RibU (ribU).